The sequence spans 568 residues: Potassium-transporting ATPase potassium-binding subunit (568 aa).

Transmembrane regions (helical) follow at residues 7-27, 65-85, 135-155, 177-197, 254-274, 286-306, 383-403, 422-442, 489-509, and 530-550; these read AEIA…GLFL, SYAL…YAIL, AGLT…AAAV, VSLY…VALG, LTNL…VVAF, ALIT…YWTE, GLYG…LMVG, MLAV…AAVL, LGIA…AIAG, and LFIG…FFPA.

Belongs to the KdpA family. As to quaternary structure, the system is composed of three essential subunits: KdpA, KdpB and KdpC.

The protein localises to the cell inner membrane. Functionally, part of the high-affinity ATP-driven potassium transport (or Kdp) system, which catalyzes the hydrolysis of ATP coupled with the electrogenic transport of potassium into the cytoplasm. This subunit binds the periplasmic potassium ions and delivers the ions to the membrane domain of KdpB through an intramembrane tunnel. The sequence is that of Potassium-transporting ATPase potassium-binding subunit from Beijerinckia indica subsp. indica (strain ATCC 9039 / DSM 1715 / NCIMB 8712).